A 143-amino-acid polypeptide reads, in one-letter code: 3-hydroxyacyl-[acyl-carrier-protein] dehydratase FabZ (143 aa).

The active site involves His49.

This sequence belongs to the thioester dehydratase family. FabZ subfamily.

The protein localises to the cytoplasm. It carries out the reaction a (3R)-hydroxyacyl-[ACP] = a (2E)-enoyl-[ACP] + H2O. Its function is as follows. Involved in unsaturated fatty acids biosynthesis. Catalyzes the dehydration of short chain beta-hydroxyacyl-ACPs and long chain saturated and unsaturated beta-hydroxyacyl-ACPs. In Wolbachia pipientis subsp. Culex pipiens (strain wPip), this protein is 3-hydroxyacyl-[acyl-carrier-protein] dehydratase FabZ.